Consider the following 338-residue polypeptide: Glyceraldehyde-3-phosphate dehydrogenase (338 aa).

NAD(+) is bound by residues 11–12 and G109; that span reads TI. 138-140 provides a ligand contact to D-glyceraldehyde 3-phosphate; the sequence is SCN. C139 (nucleophile) is an active-site residue. R167 lines the NAD(+) pocket. Residues T169 and 192-193 each bind D-glyceraldehyde 3-phosphate; that span reads HA. Residue Q299 participates in NAD(+) binding.

Belongs to the glyceraldehyde-3-phosphate dehydrogenase family. As to quaternary structure, homotetramer.

Its subcellular location is the cytoplasm. The catalysed reaction is D-glyceraldehyde 3-phosphate + phosphate + NADP(+) = (2R)-3-phospho-glyceroyl phosphate + NADPH + H(+). The enzyme catalyses D-glyceraldehyde 3-phosphate + phosphate + NAD(+) = (2R)-3-phospho-glyceroyl phosphate + NADH + H(+). The protein operates within carbohydrate degradation; glycolysis; pyruvate from D-glyceraldehyde 3-phosphate: step 1/5. The sequence is that of Glyceraldehyde-3-phosphate dehydrogenase from Thermoplasma volcanium (strain ATCC 51530 / DSM 4299 / JCM 9571 / NBRC 15438 / GSS1).